Here is a 43-residue protein sequence, read N- to C-terminus: Protein PsbN (43 aa).

A helical transmembrane segment spans residues 4-24 (ATIIVIFVSSLLVGITAYSVY).

It belongs to the PsbN family.

It localises to the plastid. The protein localises to the chloroplast thylakoid membrane. May play a role in photosystem I and II biogenesis. The chain is Protein PsbN from Thalassiosira pseudonana (Marine diatom).